We begin with the raw amino-acid sequence, 75 residues long: Large ribosomal subunit protein bL31 (75 aa).

Positions 16, 18, 37, and 40 each coordinate Zn(2+).

Belongs to the bacterial ribosomal protein bL31 family. Type A subfamily. In terms of assembly, part of the 50S ribosomal subunit. Zn(2+) is required as a cofactor.

Functionally, binds the 23S rRNA. The polypeptide is Large ribosomal subunit protein bL31 (Legionella pneumophila (strain Paris)).